Consider the following 218-residue polypeptide: E3 ubiquitin-protein ligase MARCHF3 (218 aa).

Residues 63-123 form an RING-CH-type zinc finger; that stretch reads SPFNDRPMCR…ELCHFRFAVE (61 aa). Zn(2+) contacts are provided by cysteine 71, cysteine 74, cysteine 87, cysteine 89, histidine 97, cysteine 100, cysteine 113, and cysteine 116. A run of 2 helical transmembrane segments spans residues 145-165 and 180-200; these read LFGD…SGWL and LEAV…LFWT.

As to quaternary structure, interacts with MARCHF2 and STX6.

It is found in the cytoplasmic vesicle membrane. It localises to the early endosome membrane. It catalyses the reaction S-ubiquitinyl-[E2 ubiquitin-conjugating enzyme]-L-cysteine + [acceptor protein]-L-lysine = [E2 ubiquitin-conjugating enzyme]-L-cysteine + N(6)-ubiquitinyl-[acceptor protein]-L-lysine.. The protein operates within protein modification; protein ubiquitination. E3 ubiquitin-protein ligase which may be involved in endosomal trafficking. E3 ubiquitin ligases accept ubiquitin from an E2 ubiquitin-conjugating enzyme in the form of a thioester and then directly transfer the ubiquitin to targeted substrates. The polypeptide is E3 ubiquitin-protein ligase MARCHF3 (Marchf3) (Mus musculus (Mouse)).